A 119-amino-acid chain; its full sequence is Flagellar transcriptional regulator FlhD (119 aa).

The protein belongs to the FlhD family. As to quaternary structure, homodimer; disulfide-linked. Forms a heterohexamer composed of two FlhC and four FlhD subunits. Each FlhC binds a FlhD dimer, forming a heterotrimer, and a hexamer assembles by dimerization of two heterotrimers.

Its subcellular location is the cytoplasm. Functions in complex with FlhC as a master transcriptional regulator that regulates transcription of several flagellar and non-flagellar operons by binding to their promoter region. Activates expression of class 2 flagellar genes, including fliA, which is a flagellum-specific sigma factor that turns on the class 3 genes. Also regulates genes whose products function in a variety of physiological pathways. In Escherichia fergusonii (strain ATCC 35469 / DSM 13698 / CCUG 18766 / IAM 14443 / JCM 21226 / LMG 7866 / NBRC 102419 / NCTC 12128 / CDC 0568-73), this protein is Flagellar transcriptional regulator FlhD.